We begin with the raw amino-acid sequence, 100 residues long: Urease subunit gamma (100 aa).

It belongs to the urease gamma subunit family. In terms of assembly, heterotrimer of UreA (gamma), UreB (beta) and UreC (alpha) subunits. Three heterotrimers associate to form the active enzyme.

The protein resides in the cytoplasm. It carries out the reaction urea + 2 H2O + H(+) = hydrogencarbonate + 2 NH4(+). The protein operates within nitrogen metabolism; urea degradation; CO(2) and NH(3) from urea (urease route): step 1/1. This Cupriavidus necator (strain ATCC 17699 / DSM 428 / KCTC 22496 / NCIMB 10442 / H16 / Stanier 337) (Ralstonia eutropha) protein is Urease subunit gamma.